Reading from the N-terminus, the 241-residue chain is Ribosome assembly factor mrt4 (241 aa).

It belongs to the universal ribosomal protein uL10 family. As to quaternary structure, associates with the pre-60S ribosomal particle.

Its subcellular location is the nucleus. The protein localises to the nucleolus. It localises to the cytoplasm. Functionally, component of the ribosome assembly machinery. Nuclear paralog of the ribosomal protein P0, it binds pre-60S subunits at an early stage of assembly in the nucleolus, and is replaced by P0 in cytoplasmic pre-60S subunits and mature 80S ribosomes. In Schizosaccharomyces pombe (strain 972 / ATCC 24843) (Fission yeast), this protein is Ribosome assembly factor mrt4.